Here is a 54-residue protein sequence, read N- to C-terminus: Ovomucoid (54 aa).

Residues 4–54 (VDCSDYPRPVCTLDYMPLCGSDNKTYSNKCNFCNAVVDSNGTITLSHFGRC) enclose the Kazal-like domain. 3 cysteine pairs are disulfide-bonded: C6-C36, C14-C33, and C22-C54. N43 is a glycosylation site (N-linked (GlcNAc...) asparagine).

Its subcellular location is the secreted. In Corvus albus (Pied crow), this protein is Ovomucoid.